We begin with the raw amino-acid sequence, 351 residues long: Protein MSS2, mitochondrial (351 aa).

2 TPR repeats span residues 155–188 and 260–294; these read HLTV…ENST and KECF…MDLE.

In terms of assembly, interacts with COX18.

The protein resides in the mitochondrion inner membrane. Its function is as follows. Required to stabilize mitochondrial cytochrome C oxidase subunit 2 (COX2) and to translocate the C-terminal domain of COX2 through the inner membrane. This is Protein MSS2, mitochondrial (MSS2) from Saccharomyces cerevisiae (strain ATCC 204508 / S288c) (Baker's yeast).